The sequence spans 308 residues: Mitoferrin (308 aa).

Transmembrane regions (helical) follow at residues 13–29 (GGSF…AGFA), 69–89 (ITGL…SHAV), 111–131 (IKVG…ASPM), 168–184 (YTTT…VYFA), 213–233 (LVAG…FDVV), and 285–302 (MVFH…YEYF). 3 Solcar repeats span residues 14–100 (GSFY…LKFK), 108–192 (HHPI…LKKI), and 207–305 (YQLI…FKFI).

It belongs to the mitochondrial carrier (TC 2.A.29) family.

The protein localises to the mitochondrion inner membrane. Functionally, mitochondrial solute carriers shuttle metabolites, nucleotides, and cofactors through the mitochondrial inner membrane. Mitochondrial iron transporter that mediates iron uptake. Probably required for heme synthesis of hemoproteins and Fe-S cluster assembly. The chain is Mitoferrin (mcfF) from Dictyostelium discoideum (Social amoeba).